The following is a 423-amino-acid chain: Gamma-glutamyl phosphate reductase (423 aa).

Belongs to the gamma-glutamyl phosphate reductase family.

It localises to the cytoplasm. It catalyses the reaction L-glutamate 5-semialdehyde + phosphate + NADP(+) = L-glutamyl 5-phosphate + NADPH + H(+). The protein operates within amino-acid biosynthesis; L-proline biosynthesis; L-glutamate 5-semialdehyde from L-glutamate: step 2/2. In terms of biological role, catalyzes the NADPH-dependent reduction of L-glutamate 5-phosphate into L-glutamate 5-semialdehyde and phosphate. The product spontaneously undergoes cyclization to form 1-pyrroline-5-carboxylate. This chain is Gamma-glutamyl phosphate reductase, found in Pseudomonas entomophila (strain L48).